We begin with the raw amino-acid sequence, 440 residues long: 23S rRNA (uracil(1939)-C(5))-methyltransferase RlmD (440 aa).

The TRAM domain occupies proline 6 to glutamine 64. 4 residues coordinate [4Fe-4S] cluster: cysteine 77, cysteine 83, cysteine 86, and cysteine 164. The S-adenosyl-L-methionine site is built by glutamine 273, phenylalanine 302, asparagine 307, glutamate 323, aspartate 351, and aspartate 372. The Nucleophile role is filled by cysteine 397.

Belongs to the class I-like SAM-binding methyltransferase superfamily. RNA M5U methyltransferase family. RlmD subfamily.

It carries out the reaction uridine(1939) in 23S rRNA + S-adenosyl-L-methionine = 5-methyluridine(1939) in 23S rRNA + S-adenosyl-L-homocysteine + H(+). Catalyzes the formation of 5-methyl-uridine at position 1939 (m5U1939) in 23S rRNA. The protein is 23S rRNA (uracil(1939)-C(5))-methyltransferase RlmD of Acidithiobacillus ferrooxidans (strain ATCC 23270 / DSM 14882 / CIP 104768 / NCIMB 8455) (Ferrobacillus ferrooxidans (strain ATCC 23270)).